A 710-amino-acid polypeptide reads, in one-letter code: Mitochondrial intermediate peptidase (710 aa).

A mitochondrion-targeting transit peptide spans 1–33 (MLLAAGTRYAYRLCGRRAAAALQGRAGRSCARS). Residue K124 is modified to N6-acetyllysine. H492 is a binding site for Zn(2+). The active site involves E493. Residues H496 and H499 each contribute to the Zn(2+) site.

It belongs to the peptidase M3 family. In terms of assembly, monomer. Requires Zn(2+) as cofactor.

The protein localises to the mitochondrion matrix. The enzyme catalyses Release of an N-terminal octapeptide as second stage of processing of some proteins imported into the mitochondrion.. Activity is divalent cation-dependent. It is stimulated by manganese, magnesium or calcium ions and reversibly inhibited by zinc, cobalt and iron. Its function is as follows. Cleaves proteins, imported into the mitochondrion, to their mature size. This chain is Mitochondrial intermediate peptidase (Mipep), found in Rattus norvegicus (Rat).